We begin with the raw amino-acid sequence, 175 residues long: 3-hydroxydecanoyl-[acyl-carrier-protein] dehydratase (175 aa).

Histidine 74 is an active-site residue.

This sequence belongs to the thioester dehydratase family. FabA subfamily. Homodimer.

It localises to the cytoplasm. The catalysed reaction is a (3R)-hydroxyacyl-[ACP] = a (2E)-enoyl-[ACP] + H2O. It catalyses the reaction (3R)-hydroxydecanoyl-[ACP] = (2E)-decenoyl-[ACP] + H2O. It carries out the reaction (2E)-decenoyl-[ACP] = (3Z)-decenoyl-[ACP]. It participates in lipid metabolism; fatty acid biosynthesis. Necessary for the introduction of cis unsaturation into fatty acids. Catalyzes the dehydration of (3R)-3-hydroxydecanoyl-ACP to E-(2)-decenoyl-ACP and then its isomerization to Z-(3)-decenoyl-ACP. Can catalyze the dehydratase reaction for beta-hydroxyacyl-ACPs with saturated chain lengths up to 16:0, being most active on intermediate chain length. The chain is 3-hydroxydecanoyl-[acyl-carrier-protein] dehydratase from Alcanivorax borkumensis (strain ATCC 700651 / DSM 11573 / NCIMB 13689 / SK2).